Consider the following 54-residue polypeptide: Photosystem II reaction center protein K (54 aa).

Residues M1–A17 constitute a propeptide that is removed on maturation. A helical membrane pass occupies residues L33 to F53.

Belongs to the PsbK family. PSII is composed of 1 copy each of membrane proteins PsbA, PsbB, PsbC, PsbD, PsbE, PsbF, PsbH, PsbI, PsbJ, PsbK, PsbL, PsbM, PsbT, PsbY, PsbZ, Psb30/Ycf12, at least 3 peripheral proteins of the oxygen-evolving complex and a large number of cofactors. It forms dimeric complexes.

The protein resides in the plastid. Its subcellular location is the chloroplast thylakoid membrane. Functionally, one of the components of the core complex of photosystem II (PSII). PSII is a light-driven water:plastoquinone oxidoreductase that uses light energy to abstract electrons from H(2)O, generating O(2) and a proton gradient subsequently used for ATP formation. It consists of a core antenna complex that captures photons, and an electron transfer chain that converts photonic excitation into a charge separation. The protein is Photosystem II reaction center protein K of Euglena deses.